Consider the following 193-residue polypeptide: Pyridoxal 5'-phosphate synthase subunit PdxT (193 aa).

L-glutamine is bound at residue 50–52 (GES). The active-site Nucleophile is the cysteine 82. L-glutamine contacts are provided by residues arginine 109 and 136–137 (IR). Residues histidine 172 and glutamate 174 each act as charge relay system in the active site.

This sequence belongs to the glutaminase PdxT/SNO family. As to quaternary structure, in the presence of PdxS, forms a dodecamer of heterodimers. Only shows activity in the heterodimer.

The catalysed reaction is aldehydo-D-ribose 5-phosphate + D-glyceraldehyde 3-phosphate + L-glutamine = pyridoxal 5'-phosphate + L-glutamate + phosphate + 3 H2O + H(+). It catalyses the reaction L-glutamine + H2O = L-glutamate + NH4(+). It functions in the pathway cofactor biosynthesis; pyridoxal 5'-phosphate biosynthesis. Its function is as follows. Catalyzes the hydrolysis of glutamine to glutamate and ammonia as part of the biosynthesis of pyridoxal 5'-phosphate. The resulting ammonia molecule is channeled to the active site of PdxS. The polypeptide is Pyridoxal 5'-phosphate synthase subunit PdxT (Streptococcus pneumoniae (strain JJA)).